Here is a 197-residue protein sequence, read N- to C-terminus: Small ribosomal subunit protein uS4c (197 aa).

The S4 RNA-binding domain maps to 92–153; that stretch reads MRLDAVVYRL…APIVEHAKTF (62 aa).

The protein belongs to the universal ribosomal protein uS4 family. As to quaternary structure, part of the 30S ribosomal subunit. Contacts protein S5. The interaction surface between S4 and S5 is involved in control of translational fidelity.

It is found in the plastid. Its subcellular location is the chloroplast. Functionally, one of the primary rRNA binding proteins, it binds directly to 16S rRNA where it nucleates assembly of the body of the 30S subunit. In terms of biological role, with S5 and S12 plays an important role in translational accuracy. The polypeptide is Small ribosomal subunit protein uS4c (rps4) (Ostreococcus tauri).